The sequence spans 488 residues: Bifunctional protein GlmU (488 aa).

The pyrophosphorylase stretch occupies residues 1 to 237 (MPRTRTPLAA…VEEASGVNDR (237 aa)). UDP-N-acetyl-alpha-D-glucosamine contacts are provided by residues 13-16 (LAAG), Lys27, Gln82, 87-88 (GT), 110-112 (SGD), Gly149, Glu164, Asn179, and Asn235. A Mg(2+)-binding site is contributed by Asp112. Residue Asn235 coordinates Mg(2+). The interval 238 to 258 (VELSRANRVMVGRLAEAFMRA) is linker. The tract at residues 259-488 (GVTIEDPARF…KGRPAARRAS (230 aa)) is N-acetyltransferase. The UDP-N-acetyl-alpha-D-glucosamine site is built by Arg341 and Lys359. Catalysis depends on His371, which acts as the Proton acceptor. UDP-N-acetyl-alpha-D-glucosamine contacts are provided by Tyr374 and Asn385. Residues Ala388, 394-395 (NY), Ser413, Ala431, and Arg448 each bind acetyl-CoA. The segment at 459–488 (AQRQAEKQMKGTATGPASARKGRPAARRAS) is disordered. Positions 478-488 (RKGRPAARRAS) are enriched in basic residues.

It in the N-terminal section; belongs to the N-acetylglucosamine-1-phosphate uridyltransferase family. This sequence in the C-terminal section; belongs to the transferase hexapeptide repeat family. Homotrimer. Mg(2+) is required as a cofactor.

It localises to the cytoplasm. The enzyme catalyses alpha-D-glucosamine 1-phosphate + acetyl-CoA = N-acetyl-alpha-D-glucosamine 1-phosphate + CoA + H(+). It carries out the reaction N-acetyl-alpha-D-glucosamine 1-phosphate + UTP + H(+) = UDP-N-acetyl-alpha-D-glucosamine + diphosphate. It participates in nucleotide-sugar biosynthesis; UDP-N-acetyl-alpha-D-glucosamine biosynthesis; N-acetyl-alpha-D-glucosamine 1-phosphate from alpha-D-glucosamine 6-phosphate (route II): step 2/2. Its pathway is nucleotide-sugar biosynthesis; UDP-N-acetyl-alpha-D-glucosamine biosynthesis; UDP-N-acetyl-alpha-D-glucosamine from N-acetyl-alpha-D-glucosamine 1-phosphate: step 1/1. It functions in the pathway bacterial outer membrane biogenesis; LPS lipid A biosynthesis. Functionally, catalyzes the last two sequential reactions in the de novo biosynthetic pathway for UDP-N-acetylglucosamine (UDP-GlcNAc). The C-terminal domain catalyzes the transfer of acetyl group from acetyl coenzyme A to glucosamine-1-phosphate (GlcN-1-P) to produce N-acetylglucosamine-1-phosphate (GlcNAc-1-P), which is converted into UDP-GlcNAc by the transfer of uridine 5-monophosphate (from uridine 5-triphosphate), a reaction catalyzed by the N-terminal domain. This Anaeromyxobacter sp. (strain K) protein is Bifunctional protein GlmU.